The chain runs to 156 residues: Small ribosomal subunit protein uS7 (156 aa).

It belongs to the universal ribosomal protein uS7 family. As to quaternary structure, part of the 30S ribosomal subunit. Contacts proteins S9 and S11.

One of the primary rRNA binding proteins, it binds directly to 16S rRNA where it nucleates assembly of the head domain of the 30S subunit. Is located at the subunit interface close to the decoding center, probably blocks exit of the E-site tRNA. The sequence is that of Small ribosomal subunit protein uS7 from Streptococcus gordonii (strain Challis / ATCC 35105 / BCRC 15272 / CH1 / DL1 / V288).